The primary structure comprises 500 residues: NAD(P)H-quinone oxidoreductase chain 4, chloroplastic (500 aa).

14 helical membrane passes run 3–23 (FFPW…LIFF), 37–57 (ICIC…HFQL), 87–107 (IGPI…AWPI), 113–130 (LFHF…GSFS), 134–154 (LLLF…LLSM), 167–187 (FILY…GMGL), 208–228 (ALEI…SPII), 242–262 (HYST…YGLV), 272–292 (AHSI…IYAA), 305–325 (IAYS…SITD), 330–350 (GAVL…FLAG), 386–406 (LALP…GIIT), 416–436 (ILIT…SLSM), and 462–482 (LFVS…PDFV).

Belongs to the complex I subunit 4 family.

It is found in the plastid. The protein localises to the chloroplast thylakoid membrane. It carries out the reaction a plastoquinone + NADH + (n+1) H(+)(in) = a plastoquinol + NAD(+) + n H(+)(out). The catalysed reaction is a plastoquinone + NADPH + (n+1) H(+)(in) = a plastoquinol + NADP(+) + n H(+)(out). In Platanus occidentalis (Sycamore), this protein is NAD(P)H-quinone oxidoreductase chain 4, chloroplastic.